Consider the following 307-residue polypeptide: B3 domain-containing protein At5g18000 (307 aa).

A DNA-binding region (TF-B3 1) is located at residues 20–115; sequence FFKILRREDH…CFNVTIFEAD (96 aa). Disordered regions lie at residues 122 to 141 and 151 to 209; these read PRKTITSSSGRNKREERKSI and IESW…SEAG. Positions 166–177 are enriched in polar residues; it reads ESTSGRLTQKQE. The segment covering 178 to 192 has biased composition (basic and acidic residues); it reads LNLRKKEADKTEKSK. The segment at residues 214–307 is a DNA-binding region (TF-B3 2); the sequence is IPEFKLTIKK…TEMRVKVSKE (94 aa).

It is found in the nucleus. The polypeptide is B3 domain-containing protein At5g18000 (Arabidopsis thaliana (Mouse-ear cress)).